The sequence spans 348 residues: tRNA N6-adenosine threonylcarbamoyltransferase (348 aa).

Residues His-116 and His-120 each contribute to the Fe cation site. Substrate-binding positions include 138 to 142 (QVSGG), Asp-171, Gly-184, Asp-188, and Asn-277. A Fe cation-binding site is contributed by Asp-309.

This sequence belongs to the KAE1 / TsaD family. Fe(2+) serves as cofactor.

The protein resides in the cytoplasm. The catalysed reaction is L-threonylcarbamoyladenylate + adenosine(37) in tRNA = N(6)-L-threonylcarbamoyladenosine(37) in tRNA + AMP + H(+). Required for the formation of a threonylcarbamoyl group on adenosine at position 37 (t(6)A37) in tRNAs that read codons beginning with adenine. Is involved in the transfer of the threonylcarbamoyl moiety of threonylcarbamoyl-AMP (TC-AMP) to the N6 group of A37, together with TsaE and TsaB. TsaD likely plays a direct catalytic role in this reaction. The sequence is that of tRNA N6-adenosine threonylcarbamoyltransferase from Lactobacillus gasseri (strain ATCC 33323 / DSM 20243 / BCRC 14619 / CIP 102991 / JCM 1131 / KCTC 3163 / NCIMB 11718 / NCTC 13722 / AM63).